A 181-amino-acid chain; its full sequence is Large ribosomal subunit protein uL5 (181 aa).

The protein belongs to the universal ribosomal protein uL5 family. Part of the 50S ribosomal subunit; contacts the 5S rRNA and probably tRNA. Forms a bridge to the 30S subunit in the 70S ribosome.

In terms of biological role, this is one of the proteins that bind and probably mediate the attachment of the 5S RNA into the large ribosomal subunit, where it forms part of the central protuberance. In the 70S ribosome it contacts protein S13 of the 30S subunit (bridge B1b), connecting the 2 subunits; this bridge is implicated in subunit movement. May contact the P site tRNA; the 5S rRNA and some of its associated proteins might help stabilize positioning of ribosome-bound tRNAs. The sequence is that of Large ribosomal subunit protein uL5 from Methanococcus aeolicus (strain ATCC BAA-1280 / DSM 17508 / OCM 812 / Nankai-3).